Reading from the N-terminus, the 114-residue chain is Fumarate reductase subunit D (114 aa).

3 helical membrane-spanning segments follow: residues 24–44 (VSAI…PFGL), 50–70 (LITF…TIFP), and 92–112 (GGFI…FAVI).

This sequence belongs to the FrdD family. In terms of assembly, part of an enzyme complex containing four subunits: a flavoprotein (FrdA), an iron-sulfur protein (FrdB), and two hydrophobic anchor proteins (FrdC and FrdD).

It localises to the cell inner membrane. Its function is as follows. Anchors the catalytic components of the fumarate reductase complex to the cell membrane, binds quinones. This is Fumarate reductase subunit D from Haemophilus influenzae (strain PittEE).